The following is a 504-amino-acid chain: Glutamate--tRNA ligase (504 aa).

The 'HIGH' region motif lies at 25 to 35; the sequence is PSPTGNPHVGL. Residues Cys-122, Cys-124, Cys-149, and Asp-151 each coordinate Zn(2+). A 'KMSKS' region motif is present at residues 270–274; the sequence is KLSKR. An ATP-binding site is contributed by Lys-273.

The protein belongs to the class-I aminoacyl-tRNA synthetase family. Glutamate--tRNA ligase type 1 subfamily. As to quaternary structure, monomer. It depends on Zn(2+) as a cofactor.

The protein resides in the cytoplasm. It carries out the reaction tRNA(Glu) + L-glutamate + ATP = L-glutamyl-tRNA(Glu) + AMP + diphosphate. In terms of biological role, catalyzes the attachment of glutamate to tRNA(Glu) in a two-step reaction: glutamate is first activated by ATP to form Glu-AMP and then transferred to the acceptor end of tRNA(Glu). The polypeptide is Glutamate--tRNA ligase (Streptomyces griseus subsp. griseus (strain JCM 4626 / CBS 651.72 / NBRC 13350 / KCC S-0626 / ISP 5235)).